The primary structure comprises 529 residues: Peptide chain release factor 3 (529 aa).

Residues Ala-11–Met-280 enclose the tr-type G domain. GTP is bound by residues Ser-20–Thr-27, Asp-88–His-92, and Asn-142–Asp-145.

The protein belongs to the TRAFAC class translation factor GTPase superfamily. Classic translation factor GTPase family. PrfC subfamily.

The protein localises to the cytoplasm. Its function is as follows. Increases the formation of ribosomal termination complexes and stimulates activities of RF-1 and RF-2. It binds guanine nucleotides and has strong preference for UGA stop codons. It may interact directly with the ribosome. The stimulation of RF-1 and RF-2 is significantly reduced by GTP and GDP, but not by GMP. In Klebsiella pneumoniae subsp. pneumoniae (strain ATCC 700721 / MGH 78578), this protein is Peptide chain release factor 3.